We begin with the raw amino-acid sequence, 275 residues long: tRNA pseudouridine synthase A (275 aa).

Aspartate 56 acts as the Nucleophile in catalysis. Tyrosine 110 is a binding site for substrate.

It belongs to the tRNA pseudouridine synthase TruA family.

It catalyses the reaction uridine(38/39/40) in tRNA = pseudouridine(38/39/40) in tRNA. Functionally, formation of pseudouridine at positions 38, 39 and 40 in the anticodon stem and loop of transfer RNAs. This chain is tRNA pseudouridine synthase A, found in Haloarcula marismortui (strain ATCC 43049 / DSM 3752 / JCM 8966 / VKM B-1809) (Halobacterium marismortui).